Consider the following 862-residue polypeptide: MMNAHFAGVGDNADNAAYEHGIQVIDEDKMFNGNVSTYLNIEKVIPAGFNYHLISVFGSQSTGKSTLLNHLFGTQFGVMSEQERRQTTKGIWMSKNKRESGGSSMAENILVMDVEGTDGRERGEDQDFERKSALFALATSEVLIVNIWEHQVGLYQGANMGLLKTVFEVNLQLFVKDSQSTPRSLLFFVIRDHLGTTPLKNLQNTLVQDLSKLWSTISKPAGLENSRIEDYFDFAFVALPHKILQPEKFDEAVTQLSTRFKEGYNDPRKSGLIDEATAPIFLPQYHRRIPADGFSAYAEGVWDQIVNNKDLDLPTQQELLAQFRCDEISREVQVAFDETITPLEDKQAEDARAGTHSLIPDLGPKMNAARQKVLKDFDVNASRYHKGVYKRKQAELEGKVDTRLKALFQKQLTAAHKSGIEGFTEAVSAAVKNGQKKNASYDFAQIVDSEKKKALTKFEEDATAMAIEGAAWSSHENELKIYKKELDDVSGRLRKEEMRRLATRIERWVRTRLDESIGLEFNKLGSGRGGSGAPEHGDRPPTEKDLWDRVWTIFTDTVKMAEKRFTDRASSFDASADEVEVGLWRLRRKSWGVLRAKIDEEVMEGNILLKLRENFEDKFRYDDLGVPRIWRPTDDIDGLYTKARESTITVIPLLAHFKLAKTSKPPPLDAWIGEAPASVSPADEEDLSPIGGVDDDEDKTLEDEMTILSDGKQADLLVRFKKTADGVYVEAKRGAIGGLSQIPFWLYPAMLALGWNEIVAVLRNPIYFIFLILLAVAAYVTYTLNLWGPIMRVANAASQQGLEVGKERLRAFLENSDAGRQAMAMSGSGDSNSTRRYEDVKMDRLNGDGKKSKSMEEDLDDI.

Residues M1–Q741 are Cytoplasmic-facing. The region spanning G48 to A298 is the GB1/RHD3-type G domain. G58 to S65 is a GTP binding site. Positions S473 to R499 form a coiled coil. The segment at L524–E543 is disordered. Residues I742–L762 form a helical membrane-spanning segment. Over R763–P765 the chain is Lumenal. Residues I766 to L786 traverse the membrane as a helical segment. Topologically, residues W787 to I862 are cytoplasmic. Residues Q821 to I862 are disordered. Positions S833–E856 are enriched in basic and acidic residues.

The protein belongs to the TRAFAC class dynamin-like GTPase superfamily. GB1/RHD3 GTPase family. RHD3 subfamily.

It localises to the endoplasmic reticulum membrane. Its function is as follows. Cooperates with the reticulon proteins and tubule-shaping DP1 family proteins to generate and maintain the structure of the tubular endoplasmic reticulum network. Has GTPase activity, which is required for its function in ER organization. This chain is Protein sey1 (sey1), found in Pyrenophora tritici-repentis (strain Pt-1C-BFP) (Wheat tan spot fungus).